The primary structure comprises 2771 residues: Kinesin-like protein KIN-12D (2771 aa).

Basic and acidic residues-rich tracts occupy residues 1 to 13 (MSKE…RDSD) and 40 to 54 (KNPK…DRTP). 2 disordered regions span residues 1–73 (MSKE…TPDK) and 117–139 (YSET…GSCY). Positions 118–131 (SETNSTQNTPTKSV) are enriched in polar residues. Residues 193-530 (NVQILIRVRP…LKFAQRAKLI (338 aa)) enclose the Kinesin motor domain. 274-281 (GQTGSGKT) is an ATP binding site. 3 microtubules-binding regions span residues 400-404 (SSRSH), 431-437 (VDLAGSE), and 479-483 (HIPYR). Coiled-coil stretches lie at residues 1033–1110 (AATA…NEME), 1267–1331 (ELKQ…MKEK), 1410–1505 (IILL…YVEN), 2108–2390 (ELED…EQVK), and 2512–2677 (RERD…LAQE). The span at 2727–2736 (LKGKAKSRRS) shows a compositional bias: basic residues. Residues 2727–2771 (LKGKAKSRRSRNPERKMPSMPSPRRSWSQSPRSMSQVPFFSSLDR) form a disordered region. Residues 2744–2762 (PSMPSPRRSWSQSPRSMSQ) show a composition bias toward low complexity.

This sequence belongs to the TRAFAC class myosin-kinesin ATPase superfamily. Kinesin family. KIN-12 subfamily. In terms of tissue distribution, expressed in tissues enriched in dividing cells, such as root meristems, root primordia, and leaf primordia/young leaves.

It localises to the cytoplasm. Its subcellular location is the cytoskeleton. The protein resides in the phragmoplast. Involved in the spatial control of cytokinesis by a proper phragmoplast guidance. The chain is Kinesin-like protein KIN-12D from Arabidopsis thaliana (Mouse-ear cress).